Consider the following 145-residue polypeptide: Basic phospholipase A2 PC10 (145 aa).

An N-terminal signal peptide occupies residues 1–21 (MYPAHLLLLLAVCVSLLGASA). The propeptide occupies 22–27 (IPPLPL). 7 cysteine pairs are disulfide-bonded: Cys-38/Cys-98, Cys-54/Cys-144, Cys-56/Cys-72, Cys-71/Cys-125, Cys-78/Cys-118, Cys-87/Cys-111, and Cys-105/Cys-116. Residues Tyr-55, Gly-57, and Gly-59 each contribute to the Ca(2+) site. The active site involves His-75. Asp-76 provides a ligand contact to Ca(2+). The active site involves Asp-119.

It belongs to the phospholipase A2 family. Group I subfamily. D49 sub-subfamily. It depends on Ca(2+) as a cofactor.

The protein localises to the secreted. The catalysed reaction is a 1,2-diacyl-sn-glycero-3-phosphocholine + H2O = a 1-acyl-sn-glycero-3-phosphocholine + a fatty acid + H(+). Its function is as follows. PLA2 catalyzes the calcium-dependent hydrolysis of the 2-acyl groups in 3-sn-phosphoglycerides. This is Basic phospholipase A2 PC10 from Laticauda laticaudata (Blue-ringed sea krait).